Consider the following 66-residue polypeptide: MPKQKTHRASAKRFKRTGSGGLKRFRAYTSHRFHGKTKKQRRHLRKAGMVHAGDFKRIKSMLTGLK.

Residues 1-16 (MPKQKTHRASAKRFKR) are compositionally biased toward basic residues. Positions 1–22 (MPKQKTHRASAKRFKRTGSGGL) are disordered.

This sequence belongs to the bacterial ribosomal protein bL35 family.

This Streptococcus suis (strain 05ZYH33) protein is Large ribosomal subunit protein bL35.